The following is a 567-amino-acid chain: Proline--tRNA ligase (567 aa).

This sequence belongs to the class-II aminoacyl-tRNA synthetase family. ProS type 1 subfamily. Homodimer.

The protein localises to the cytoplasm. It carries out the reaction tRNA(Pro) + L-proline + ATP = L-prolyl-tRNA(Pro) + AMP + diphosphate. Its function is as follows. Catalyzes the attachment of proline to tRNA(Pro) in a two-step reaction: proline is first activated by ATP to form Pro-AMP and then transferred to the acceptor end of tRNA(Pro). As ProRS can inadvertently accommodate and process non-cognate amino acids such as alanine and cysteine, to avoid such errors it has two additional distinct editing activities against alanine. One activity is designated as 'pretransfer' editing and involves the tRNA(Pro)-independent hydrolysis of activated Ala-AMP. The other activity is designated 'posttransfer' editing and involves deacylation of mischarged Ala-tRNA(Pro). The misacylated Cys-tRNA(Pro) is not edited by ProRS. This Staphylococcus aureus (strain COL) protein is Proline--tRNA ligase.